An 87-amino-acid polypeptide reads, in one-letter code: Defensin-like protein 223 (87 aa).

The signal sequence occupies residues 1-34 (MKSTIFVLTLLIFVSLYFNIIVYVSFSFIGTSEI). 3 disulfides stabilise this stretch: Cys55-Cys72, Cys58-Cys77, and Cys62-Cys79.

This sequence belongs to the DEFL family.

Its subcellular location is the secreted. The chain is Defensin-like protein 223 from Arabidopsis thaliana (Mouse-ear cress).